Reading from the N-terminus, the 317-residue chain is Alkylsulfatase (317 aa).

His-78 is a binding site for substrate. Fe cation is bound by residues His-105 and Asp-107. Val-108 is a binding site for substrate. Thr-132 provides a ligand contact to 2-oxoglutarate. His-261 serves as a coordination point for Fe cation. Residues Arg-272 and Arg-276 each contribute to the 2-oxoglutarate site.

Belongs to the TfdA dioxygenase family. Homotetramer. Fe(2+) serves as cofactor.

Functionally, alpha-ketoglutarate-dependent dioxygenase that in vitro catalyzes the oxygenolytic release of sulfite from hexylsulfate. The polypeptide is Alkylsulfatase (Acinetobacter baylyi (strain ATCC 33305 / BD413 / ADP1)).